The primary structure comprises 145 residues: Large ribosomal subunit protein bL9 (145 aa).

The protein belongs to the bacterial ribosomal protein bL9 family.

In terms of biological role, binds to the 23S rRNA. This is Large ribosomal subunit protein bL9 from Mesomycoplasma hyopneumoniae (strain 232) (Mycoplasma hyopneumoniae).